We begin with the raw amino-acid sequence, 439 residues long: MKKDIVKPSILPGFMELLPADQIVFNKMKDTIRHNYEKFGFIPLDTPTIEKSEILLAKGGGETEKQIYRFNKGNTDLSLRFDLTVPLARYVSQHFSDLNFPFRRYHISKVFRGERNQKGRFREFYQCDIDIIGNGSLSIINDAEIPSIIYQTFKELGFEDFTIRINNRKVLNGFFEGTDVEDRKGVLRAIDKIEKIGEDGVRKELQELGLEDSKIDKIINFINIKGTKSEVIKSLKELDIENDVFKEGVYELEKVVHYIKSFNVPDKNYKIDLTIARGLDYYTGTVYETVLNNYPQIGSVCSGGRYDNLAEHYTNQKLPGVGISIGLTRLFYQLREAKIIGENASSTLSQALVIPVGDTMEYSIKVANKLRENEIISELYLEDAKIGKKFAYADKLKIPYVILIGEDELKEEKVSVKNMETGNQESMSLEEAIKIIKNA.

It belongs to the class-II aminoacyl-tRNA synthetase family. As to quaternary structure, homodimer.

It localises to the cytoplasm. The catalysed reaction is tRNA(His) + L-histidine + ATP = L-histidyl-tRNA(His) + AMP + diphosphate + H(+). In Clostridium tetani (strain Massachusetts / E88), this protein is Histidine--tRNA ligase.